The primary structure comprises 353 residues: MATDGLHENETLASLKIEAESLKGKLEEERAKLHDVELHQVAERVEALGQFVMKTRRTLKGHGNKVLCMDWCKDKRRIVSSSQDGKVIVWDSFTTNKEHAVTMPCTWVMACAYAPSGCAIACGGLDNKCSVYPLTFDKNENMAAKKKSVAMHTNYLSACSFTNSDMQILTASGDGTCALWDVESGQLLQSFHGHGADVLCLDLAPSETGNTFVSGGCDKKAMVWDMRSGQCVQAFETHESDINSVRYYPSGDAFASGSDDATCRLYDLRADREVAIYSKESIIFGASSVDFSLSGRLLFAGYNDYTINVWDVLKGARVSILFGHENRVSTLRVSPDGTAFCSGSWDHTLRVWA.

WD repeat units follow at residues 61 to 100, 103 to 142, 151 to 192, 194 to 236, 237 to 276, 278 to 320, and 323 to 352; these read GHGN…KEHA, MPCT…NENM, MHTN…QSFH, HGAD…QAFE, THES…EVAI, SKES…RVSI, and GHEN…LRVW.

Belongs to the WD repeat G protein beta family. In terms of assembly, component of a complex composed of RGS9 (isoform RGS9-1), GNB5 and RGS9BP; within this complex, the presence of GNB5 stabilizes both itself and RGS9 and increases RGS9 GTPase-activating protein (GAP) activity. Interacts with RGS7, forming the RGS7-GNB5 complex; within this complex, the presence of GNB5 increases RGS7 GTPase-activating protein (GAP) activity. Interacts with GPR158; promotes the GTPase activator activity of the RGS7-GNB5 complex in absence of glycine, in contrast GTPase activator activity of the RGS7-GNB5 complex is inhibited in presence of glycine. Interacts with RGS6.

The protein localises to the membrane. Functionally, enhances GTPase-activating protein (GAP) activity of regulator of G protein signaling (RGS) proteins, such as RGS7 and RGS9, hence involved in the termination of the signaling initiated by the G protein coupled receptors (GPCRs) by accelerating the GTP hydrolysis on the G-alpha subunits, thereby promoting their inactivation. Increases RGS7 GTPase-activating protein (GAP) activity, thereby regulating mood and cognition. Increases RGS9 GTPase-activating protein (GAP) activity, hence contributes to the deactivation of G protein signaling initiated by D(2) dopamine receptors. May play an important role in neuronal signaling, including in the parasympathetic, but not sympathetic, control of heart rate. This Oryctolagus cuniculus (Rabbit) protein is Guanine nucleotide-binding protein subunit beta-5 (GNB5).